Reading from the N-terminus, the 353-residue chain is Ribosomal RNA large subunit methyltransferase M (353 aa).

Residues Ser-179, 212 to 215 (APGG), Asp-231, Asp-251, and Asp-267 each bind S-adenosyl-L-methionine. Lys-296 serves as the catalytic Proton acceptor.

The protein belongs to the class I-like SAM-binding methyltransferase superfamily. RNA methyltransferase RlmE family. RlmM subfamily. As to quaternary structure, monomer.

The protein localises to the cytoplasm. It catalyses the reaction cytidine(2498) in 23S rRNA + S-adenosyl-L-methionine = 2'-O-methylcytidine(2498) in 23S rRNA + S-adenosyl-L-homocysteine + H(+). Its function is as follows. Catalyzes the 2'-O-methylation at nucleotide C2498 in 23S rRNA. The polypeptide is Ribosomal RNA large subunit methyltransferase M (Laribacter hongkongensis (strain HLHK9)).